The chain runs to 209 residues: Dephospho-CoA kinase (209 aa).

Residues 13-209 (RIGLTGGIAT…AIEKVVVAEN (197 aa)) form the DPCK domain. 21 to 26 (ATGKST) contacts ATP.

Belongs to the CoaE family.

The protein localises to the cytoplasm. The catalysed reaction is 3'-dephospho-CoA + ATP = ADP + CoA + H(+). The protein operates within cofactor biosynthesis; coenzyme A biosynthesis; CoA from (R)-pantothenate: step 5/5. In terms of biological role, catalyzes the phosphorylation of the 3'-hydroxyl group of dephosphocoenzyme A to form coenzyme A. The protein is Dephospho-CoA kinase of Synechococcus elongatus (strain ATCC 33912 / PCC 7942 / FACHB-805) (Anacystis nidulans R2).